Reading from the N-terminus, the 265-residue chain is Orphan methyltransferase M.BamHII (265 aa).

It belongs to the N(4)/N(6)-methyltransferase family. N(4) subfamily.

The catalysed reaction is a 2'-deoxycytidine in DNA + S-adenosyl-L-methionine = an N(4)-methyl-2'-deoxycytidine in DNA + S-adenosyl-L-homocysteine + H(+). Functionally, a beta subtype methylase, recognizes the double-stranded sequence 5'-GGATCC-3', methylates C-? on both strands. No endonuclease has been identified for this methylase, although it is speculated it might protect against BamHI. This Bacillus amyloliquefaciens (Bacillus velezensis) protein is Orphan methyltransferase M.BamHII (bamHIIM).